The sequence spans 250 residues: Exotoxin type A (250 aa).

Residues 1-30 (MENNKEVLKKMVFFVLMKFLGLTILPKGIC) form the signal peptide. The cysteines at positions 117 and 128 are disulfide-linked.

The protein belongs to the staphylococcal/streptococcal toxin family.

Causative agent of the symptoms associated with scarlet fever, have been associated with streptococcal toxic shock-like disease and may play a role in the early events of rheumatic fever. The polypeptide is Exotoxin type A (speA) (Streptococcus pyogenes).